A 72-amino-acid polypeptide reads, in one-letter code: MAKEDSIEMQGTVLDTLPNTMFRVELENGHVVTAHISGKMRKHYIRILTGDTVTVQLTPYDLTKGRIVFRAR.

The S1-like domain maps to methionine 1–arginine 72.

The protein belongs to the IF-1 family. Component of the 30S ribosomal translation pre-initiation complex which assembles on the 30S ribosome in the order IF-2 and IF-3, IF-1 and N-formylmethionyl-tRNA(fMet); mRNA recruitment can occur at any time during PIC assembly.

The protein resides in the cytoplasm. Functionally, one of the essential components for the initiation of protein synthesis. Stabilizes the binding of IF-2 and IF-3 on the 30S subunit to which N-formylmethionyl-tRNA(fMet) subsequently binds. Helps modulate mRNA selection, yielding the 30S pre-initiation complex (PIC). Upon addition of the 50S ribosomal subunit IF-1, IF-2 and IF-3 are released leaving the mature 70S translation initiation complex. This Idiomarina loihiensis (strain ATCC BAA-735 / DSM 15497 / L2-TR) protein is Translation initiation factor IF-1.